The chain runs to 75 residues: Antimicrobial peptide ctriporin (75 aa).

Residues 1 to 22 form the signal peptide; sequence MDSKYLFVFLIFNVIVIDLCQG. K41 bears the Lysine amide mark. Positions 47-75 are excised as a propeptide; sequence ELGSQYDYLQDFRKRELDLDDLLSKFPDY.

This sequence belongs to the non-disulfide-bridged peptide (NDBP) superfamily. Short antimicrobial peptide (group 4) family. In terms of tissue distribution, expressed by the venom gland.

It is found in the secreted. It localises to the target cell membrane. In terms of biological role, antimicrobial peptide that acts by breaking the cell wall. Is active against Gram-positive bacteria, fungi and antibiotic-resistant pathogens: S.aureus (MIC=5 ug/ml), M.luteus (MIC=5 ug/ml), B.thuringiensis (MIC=10 ug/ml), B.subtilis (MIC=10 ug/ml), C.albicans (MIC=20 ug/ml), methicillin-resistant S.aureus (MIC=5-10 ug/ml), and penicillin-resistant S.epidermidis (MIC=10 ug/ml). Also shows potent activity against antibiotic-sensitive and -resistant Acinetobacter baumannii (MIC=10-20 uM). Shows cytolytic activity against human erythrocytes. In vivo, is efficient in curing staphylococcal skin infection in mice, when externally applied. This chain is Antimicrobial peptide ctriporin, found in Chaerilus tricostatus (Scorpion).